A 433-amino-acid chain; its full sequence is Serine--tRNA ligase (433 aa).

235-237 (TSE) contacts L-serine. Position 266–268 (266–268 (RSE)) interacts with ATP. Glu-289 serves as a coordination point for L-serine. Position 353–356 (353–356 (EISS)) interacts with ATP. Ser-388 is a binding site for L-serine.

This sequence belongs to the class-II aminoacyl-tRNA synthetase family. Type-1 seryl-tRNA synthetase subfamily. As to quaternary structure, homodimer. The tRNA molecule binds across the dimer.

The protein resides in the cytoplasm. The catalysed reaction is tRNA(Ser) + L-serine + ATP = L-seryl-tRNA(Ser) + AMP + diphosphate + H(+). It carries out the reaction tRNA(Sec) + L-serine + ATP = L-seryl-tRNA(Sec) + AMP + diphosphate + H(+). The protein operates within aminoacyl-tRNA biosynthesis; selenocysteinyl-tRNA(Sec) biosynthesis; L-seryl-tRNA(Sec) from L-serine and tRNA(Sec): step 1/1. Its function is as follows. Catalyzes the attachment of serine to tRNA(Ser). Is also able to aminoacylate tRNA(Sec) with serine, to form the misacylated tRNA L-seryl-tRNA(Sec), which will be further converted into selenocysteinyl-tRNA(Sec). The polypeptide is Serine--tRNA ligase (Burkholderia ambifaria (strain ATCC BAA-244 / DSM 16087 / CCUG 44356 / LMG 19182 / AMMD) (Burkholderia cepacia (strain AMMD))).